The following is a 206-amino-acid chain: Tumor protein D54 (206 aa).

Methionine 1 carries the post-translational modification N-acetylmethionine. Positions 1 to 14 (MDSAGQDINLNSPN) are enriched in polar residues. The tract at residues 1–24 (MDSAGQDINLNSPNKGLLSDSMTD) is disordered. Phosphoserine occurs at positions 3, 12, 19, and 21. A coiled-coil region spans residues 38–82 (VEGLTEAEEEELRAELTKVEEEIVTLRQVLAAKERHCGELKRRLG). A phosphoserine mark is found at serine 96, serine 149, and serine 161. Phosphothreonine is present on threonine 163. Serine 166 carries the post-translational modification Phosphoserine. Phosphothreonine is present on threonine 173. The span at 175–185 (KSKVVGDRENG) shows a compositional bias: basic and acidic residues. Residues 175–206 (KSKVVGDRENGSDSLPSSAGSGDKPLSDPAPF) form a disordered region. 2 positions are modified to phosphoserine: serine 192 and serine 195.

This sequence belongs to the TPD52 family. In terms of assembly, forms a homodimer or heterodimer with other members of the family. Interacts with MAL2.

This is Tumor protein D54 (TPD52L2) from Pongo abelii (Sumatran orangutan).